We begin with the raw amino-acid sequence, 418 residues long: Lariat debranching enzyme (418 aa).

Residues C8, H10, D39, and N84 each contribute to the a divalent metal cation site. A lariat recognition loop region spans residues 124–154; sequence SGIYNERHYRSGHFERPPYNESTIRSVYHVR. Residues H174, H226, and H228 each coordinate a divalent metal cation. Positions 372 to 418 are disordered; sequence GERTDIPASLAPSDLPTYDSEEIPIDDIDEIEEMEEAKADDHTRDDA. Over residues 390-406 the composition is skewed to acidic residues; sequence DSEEIPIDDIDEIEEME. Residues 407–418 show a composition bias toward basic and acidic residues; sequence EAKADDHTRDDA.

The protein belongs to the lariat debranching enzyme family. Fe(2+) serves as cofactor. Zn(2+) is required as a cofactor. It depends on Mn(2+) as a cofactor. As to expression, widely expressed. Expressed in roots, stems, cauline and rosette leaves, flower buds and siliques.

It is found in the nucleus. With respect to regulation, active in presence of diverse metals including Fe(2+), Zn(2+), Mn(2+). Binds two metal cations in two adjacent alpha and beta metal-binding pockets. In terms of biological role, cleaves the 2'-5' phosphodiester linkage at the branch point of lariat intron pre-mRNAs after splicing and converts them into linear molecules that are subsequently degraded. It thereby facilitates ribonucleotide turnover. It may also participate in retrovirus replication via an RNA lariat intermediate in cDNA synthesis. Plays en essential role during embryogenesis. In Arabidopsis thaliana (Mouse-ear cress), this protein is Lariat debranching enzyme (DBR1).